The chain runs to 457 residues: Multidrug resistance protein MdtK (457 aa).

12 helical membrane-spanning segments follow: residues 11 to 31 (LLALAIPVIFAQIAQTSMGVV), 53 to 73 (IWLPAILFGHGLLLALTPVIA), 93 to 113 (VLAGLVSVLIMLVLWNAGYII), 127 to 147 (AVNYLRALLWGAPGYLFFQVM), 160 to 180 (GMAMGFIGLLVNIPVNYIFIY), 188 to 208 (LGGVGCGVATASVYWVMFFCM), 243 to 263 (MPVALALFFEVTLFAVVALLV), 276 to 296 (IALNFSSLMFVLPMSMSAAVT), 316 to 336 (RTGIIVGICLAVLTALFTVVF), 357 to 377 (LMLLAAIYQISDSIQVIGSGV), 387 to 407 (IFFITFIAYWVLGLPSGYILG), and 418 to 438 (PAGFWFGFILGLTSAAIMMMW).

This sequence belongs to the multi antimicrobial extrusion (MATE) (TC 2.A.66.1) family. MdtK subfamily.

It localises to the cell inner membrane. Its function is as follows. Multidrug efflux pump that functions probably as a Na(+)/drug antiporter. The sequence is that of Multidrug resistance protein MdtK from Cronobacter sakazakii (strain ATCC BAA-894) (Enterobacter sakazakii).